A 422-amino-acid chain; its full sequence is C-type lectin domain family 4 member M (422 aa).

At 1 to 49 (MSDSKEPRVQPLGLLEEDPTTSGIRLFPRDFQFQQTHGHKSSTGCLGHG) the chain is on the cytoplasmic side. Residues 14 to 15 (LL) carry the Endocytosis signal motif. The chain crosses the membrane as a helical; Signal-anchor for type II membrane protein span at residues 50-70 (PLVLQLLSFALLAGVLVAILV). The Extracellular portion of the chain corresponds to 71 to 422 (QVYKVPSSLS…KKPIACFRDE (352 aa)). Asn92 carries N-linked (GlcNAc...) asparagine glycosylation. Tandem repeats lie at residues 108 to 130 (KLQE…PEKS), 131 to 151 (KQQE…ELPE), 154 to 176 (QLQE…PEES), 177 to 199 (RLQE…PEKS), 200 to 222 (RLQE…PEKS), 223 to 245 (RLQE…PEKS), 246 to 268 (KLQE…PDQS), and 269 to 291 (KQQQ…CCRC). Residues 108–292 (KLQEIYQELT…AFERLCCRCP (185 aa)) are 8 X approximate tandem repeats. Intrachain disulfides connect Cys288–Cys418, Cys291–Cys302, Cys319–Cys412, and Cys391–Cys404. The region spanning 297–413 (FFQGNCYFMS…CNVDNYWICK (117 aa)) is the C-type lectin domain. The Ca(2+) site is built by Glu382, Asn384, Ser386, Glu389, Asn400, and Asp401. The N-linked (GlcNAc...) asparagine glycan is linked to Asn384.

In terms of assembly, homotetramer.

The protein resides in the membrane. Its function is as follows. Probable pathogen-recognition receptor involved in peripheral immune surveillance in liver. May mediate the endocytosis of pathogens which are subsequently degraded in lysosomal compartments. Probably recognizes in a calcium-dependent manner high mannose N-linked oligosaccharides in a variety of pathogen antigens. Is a receptor for ICAM3, probably by binding to mannose-like carbohydrates. The protein is C-type lectin domain family 4 member M (CLEC4M) of Symphalangus syndactylus (Siamang).